Consider the following 328-residue polypeptide: Malate dehydrogenase (328 aa).

11–17 (GAAGQIG) lines the NAD(+) pocket. 2 residues coordinate substrate: arginine 94 and arginine 100. Residues asparagine 107, glutamine 114, and 131–133 (VGN) each bind NAD(+). Residues asparagine 133 and arginine 164 each coordinate substrate. Catalysis depends on histidine 189, which acts as the Proton acceptor.

Belongs to the LDH/MDH superfamily. MDH type 2 family.

The catalysed reaction is (S)-malate + NAD(+) = oxaloacetate + NADH + H(+). Its function is as follows. Catalyzes the reversible oxidation of malate to oxaloacetate. The protein is Malate dehydrogenase of Xylella fastidiosa (strain M12).